A 52-amino-acid polypeptide reads, in one-letter code: Large ribosomal subunit protein bL32c (52 aa).

This sequence belongs to the bacterial ribosomal protein bL32 family.

The protein localises to the plastid. The protein resides in the chloroplast. The polypeptide is Large ribosomal subunit protein bL32c (Citrus sinensis (Sweet orange)).